The primary structure comprises 485 residues: Serine/threonine-protein kinase 4 (485 aa).

Residues 30 to 281 (FDVLEKLGEG…ATELLQHPFI (252 aa)) enclose the Protein kinase domain. ATP contacts are provided by residues 36-44 (LGEGSYGSV) and lysine 59. The Proton acceptor role is filled by aspartate 149. Phosphothreonine; by autocatalysis is present on threonine 183. Positions 431–478 (YSFLKDWSVAEVQLKLNSLDPMMEREIEEIHHKYQAKRQPILEAIESK) constitute an SARAH domain.

The protein belongs to the protein kinase superfamily. STE Ser/Thr protein kinase family. STE20 subfamily. Homodimer; mediated via the coiled-coil region. It depends on Mg(2+) as a cofactor. In terms of processing, autophosphorylated on Thr-183. Post-translationally, proteolytically cleaved by caspase-3 during apoptosis at Asp-326 resulting in a 37 kDa form. Proteolytic cleavage results in kinase activation and nuclear translocation of the truncated form (MST1/N).

It localises to the cytoplasm. The protein resides in the nucleus. It carries out the reaction L-seryl-[protein] + ATP = O-phospho-L-seryl-[protein] + ADP + H(+). It catalyses the reaction L-threonyl-[protein] + ATP = O-phospho-L-threonyl-[protein] + ADP + H(+). With respect to regulation, the C-terminal non-catalytic region inhibits the kinase activity, the enzyme is activated by caspase-cleavage. Homodimerization and autophosphorylation of Thr-183 is also required for full activation. Functionally, stress-activated, pro-apoptotic kinase which, following caspase-cleavage, enters the nucleus and induces chromatin condensation followed by internucleosomal DNA fragmentation. Key component of the Hippo signaling pathway which plays a pivotal role in organ size control and tumor suppression by restricting proliferation and promoting apoptosis. The core of this pathway is composed of a kinase cascade wherein stk3/mst2 and stk4/mst1, in complex with its regulatory protein sav1, phosphorylates and activates lats1/2 in complex with its regulatory protein mob1, which in turn phosphorylates and inactivates yap1 oncoprotein and wwtr1/taz. Phosphorylation of yap1 by lats2 inhibits its translocation into the nucleus to regulate cellular genes important for cell proliferation, cell death, and cell migration. Phosphorylates 'Ser-14' of histone H2B (H2BS14ph) during apoptosis. The chain is Serine/threonine-protein kinase 4 (stk4) from Xenopus laevis (African clawed frog).